Here is a 271-residue protein sequence, read N- to C-terminus: Phosphate import ATP-binding protein PstB (271 aa).

In terms of domain architecture, ABC transporter spans 24–266; sequence MIGKDVSVYY…PDDQRTQDYI (243 aa). An ATP-binding site is contributed by 56–63; the sequence is GPSGCGKS.

It belongs to the ABC transporter superfamily. Phosphate importer (TC 3.A.1.7) family. The complex is composed of two ATP-binding proteins (PstB), two transmembrane proteins (PstC and PstA) and a solute-binding protein (PstS).

Its subcellular location is the cell inner membrane. It carries out the reaction phosphate(out) + ATP + H2O = ADP + 2 phosphate(in) + H(+). Its function is as follows. Part of the ABC transporter complex PstSACB involved in phosphate import. Responsible for energy coupling to the transport system. The polypeptide is Phosphate import ATP-binding protein PstB (Agrobacterium fabrum (strain C58 / ATCC 33970) (Agrobacterium tumefaciens (strain C58))).